Consider the following 81-residue polypeptide: 2,3-bisphosphoglycerate-independent phosphoglycerate mutase (81 aa).

Serine 14 (phosphoserine intermediate) is an active-site residue. A Mn(2+)-binding site is contributed by serine 14. Histidine 75 serves as a coordination point for substrate.

It belongs to the BPG-independent phosphoglycerate mutase family. In terms of assembly, monomer. Mn(2+) serves as cofactor.

The enzyme catalyses (2R)-2-phosphoglycerate = (2R)-3-phosphoglycerate. Its pathway is carbohydrate degradation; glycolysis; pyruvate from D-glyceraldehyde 3-phosphate: step 3/5. Catalyzes the interconversion of 2-phosphoglycerate and 3-phosphoglycerate. The chain is 2,3-bisphosphoglycerate-independent phosphoglycerate mutase (gpmI) from Tomato big bud phytoplasma.